The primary structure comprises 686 residues: Chondroitin synthase (686 aa).

Residues 130–417 (YVWAGKRKEL…LLQQKVPYFY (288 aa)) form a galactosaminyltransferase; A1 domain region. UDP-N-acetyl-alpha-D-galactosamine-binding positions include Pro-157, Arg-161, Asp-188, Tyr-217, Arg-223, and 239–240 (DC). Residue Asp-241 participates in Mn(2+) binding. Residue 361 to 362 (ED) participates in UDP-N-acetyl-alpha-D-galactosamine binding. His-386 provides a ligand contact to Mn(2+). Positions 418–682 (RKKEKIESAT…ECRKYTWEKI (265 aa)) are glucuronosyltransferase; A2 domain. Residues Tyr-441, Asp-469, and 517–520 (QLDS) each bind UDP-alpha-D-glucuronate. Asp-521 contributes to the Mn(2+) binding site. Residues His-581 and 603–604 (AV) contribute to the UDP-alpha-D-glucuronate site. His-631 provides a ligand contact to Mn(2+).

This sequence belongs to the glycosyltransferase 2 family. CS/HAS subfamily. Requires Mn(2+) as cofactor.

It carries out the reaction 3-O-(beta-D-GlcA-(1-&gt;3)-beta-D-GalNAc-(1-&gt;4)-beta-D-GlcA-(1-&gt;3)-beta-D-Gal-(1-&gt;3)-beta-D-Gal-(1-&gt;4)-beta-D-Xyl)-L-seryl-[protein] + UDP-N-acetyl-alpha-D-galactosamine = 3-O-(beta-D-GalNAc-(1-&gt;4)-beta-D-GlcA-(1-&gt;3)-beta-D-GalNAc-(1-&gt;4)-beta-D-GlcA-(1-&gt;3)-beta-D-Gal-(1-&gt;3)-beta-D-Gal-(1-&gt;4)-beta-D-Xyl)-L-seryl-[protein] + UDP + H(+). The enzyme catalyses 3-O-{beta-D-GlcA-(1-&gt;3)-[beta-D-GalNAc-(1-&gt;4)-beta-D-GlcA-(1-&gt;3)](n)-beta-D-GalNAc-(1-&gt;4)-beta-D-GlcA-(1-&gt;3)-beta-D-Gal-(1-&gt;3)-beta-D-Gal-(1-&gt;4)-beta-D-Xyl}-L-seryl-[protein] + UDP-N-acetyl-alpha-D-galactosamine = 3-O-{[beta-D-GalNAc-(1-&gt;4)-beta-D-GlcA-(1-&gt;3)](n+1)-beta-D-GalNAc-(1-&gt;4)-beta-D-GlcA-(1-&gt;3)-beta-D-Gal-(1-&gt;3)-beta-D-Gal-(1-&gt;4)-beta-D-Xyl}-L-seryl-[protein] + UDP + H(+). The catalysed reaction is 3-O-(beta-D-GalNAc-(1-&gt;4)-beta-D-GlcA-(1-&gt;3)-beta-D-Gal-(1-&gt;3)-beta-D-Gal-(1-&gt;4)-beta-D-Xyl)-L-seryl-[protein] + UDP-alpha-D-glucuronate = 3-O-(beta-D-GlcA-(1-&gt;3)-beta-D-GalNAc-(1-&gt;4)-beta-D-GlcA-(1-&gt;3)-beta-D-Gal-(1-&gt;3)-beta-D-Gal-(1-&gt;4)-beta-D-Xyl)-L-seryl-[protein] + UDP + H(+). It catalyses the reaction 3-O-{[beta-D-GalNAc-(1-&gt;4)-beta-D-GlcA-(1-&gt;3)](n)-beta-D-GalNAc-(1-&gt;4)-beta-D-GlcA-(1-&gt;3)-beta-D-Gal-(1-&gt;3)-beta-D-Gal-(1-&gt;4)-beta-D-Xyl}-L-seryl-[protein] + UDP-alpha-D-glucuronate = 3-O-{beta-D-GlcA-(1-&gt;3)-[beta-D-GalNAc-(1-&gt;4)-beta-D-GlcA-(1-&gt;3)](n)-beta-D-GalNAc-(1-&gt;4)-beta-D-GlcA-(1-&gt;3)-beta-D-Gal-(1-&gt;3)-beta-D-Gal-(1-&gt;4)-beta-D-Xyl}-L-seryl-[protein] + UDP + H(+). Functionally, glycosyltransferase that catalyzes elongation of chondroitin, a polysaccharide composed of a repeating disaccharide of N-acetylgalactosamine (GalNAc) and glucuronic acid (GlcUA) units, by alternatively transferring the GlcUA and GalNAc moiety from UDP-GlcUA and UDP-GalNAc to the non-reducing ends of the chondroitin chain. Each chondroitin unit has the composition beta-(1-&gt;4)-GlcUA-beta-(1-&gt;3)-GalNAc. The chain is Chondroitin synthase (kfoC) from Escherichia coli.